Reading from the N-terminus, the 119-residue chain is Ribosome-binding factor A (119 aa).

This sequence belongs to the RbfA family. As to quaternary structure, monomer. Binds 30S ribosomal subunits, but not 50S ribosomal subunits or 70S ribosomes.

The protein localises to the cytoplasm. Functionally, one of several proteins that assist in the late maturation steps of the functional core of the 30S ribosomal subunit. Associates with free 30S ribosomal subunits (but not with 30S subunits that are part of 70S ribosomes or polysomes). Required for efficient processing of 16S rRNA. May interact with the 5'-terminal helix region of 16S rRNA. The polypeptide is Ribosome-binding factor A (Coxiella burnetii (strain CbuG_Q212) (Coxiella burnetii (strain Q212))).